The chain runs to 278 residues: HTH-type transcriptional activator RhaS (278 aa).

Residues 174 to 272 form the HTH araC/xylS-type domain; it reads NLLLAWLEDH…NWSPRDIRQG (99 aa). 2 DNA-binding regions (H-T-H motif) span residues 191-212 and 239-262; these read DAVADQFSLSLRTLHRQLKQQT and VTDIAYRCGFSDSNHFSTLFHREF.

In terms of assembly, binds DNA as a dimer.

The protein localises to the cytoplasm. Its function is as follows. Activates expression of the rhaBAD and rhaT operons. This Shigella boydii serotype 18 (strain CDC 3083-94 / BS512) protein is HTH-type transcriptional activator RhaS.